The following is a 93-amino-acid chain: Large ribosomal subunit protein uL23cz/uL23cy (93 aa).

This sequence belongs to the universal ribosomal protein uL23 family. Part of the 50S ribosomal subunit.

Its subcellular location is the plastid. The protein resides in the chloroplast. Its function is as follows. Binds to 23S rRNA. The chain is Large ribosomal subunit protein uL23cz/uL23cy (rpl23-A) from Helianthus annuus (Common sunflower).